Reading from the N-terminus, the 456-residue chain is GTPase Der (456 aa).

EngA-type G domains follow at residues 4–169 (PVVA…PSKD) and 178–353 (VQLA…DQSR). Residues 10–17 (GRPNVGKS), 57–61 (DTGGL), 120–123 (NKCE), 184–191 (GRPNVGKS), 231–235 (DTAGI), and 296–299 (NKWD) contribute to the GTP site. In terms of domain architecture, KH-like spans 354–439 (RRVTTSVVNE…PIKLFWRGKQ (86 aa)).

This sequence belongs to the TRAFAC class TrmE-Era-EngA-EngB-Septin-like GTPase superfamily. EngA (Der) GTPase family. Associates with the 50S ribosomal subunit.

Its function is as follows. GTPase that plays an essential role in the late steps of ribosome biogenesis. This Prochlorococcus marinus (strain NATL2A) protein is GTPase Der.